Reading from the N-terminus, the 343-residue chain is Anthranilate phosphoribosyltransferase (343 aa).

5-phospho-alpha-D-ribose 1-diphosphate is bound by residues Gly78, 81–82 (GD), Thr86, 88–91 (NIST), 106–114 (KHGNRSVSS), and Ser118. An anthranilate-binding site is contributed by Gly78. Ser90 provides a ligand contact to Mg(2+). Residue Asn109 participates in anthranilate binding. Arg164 contacts anthranilate. Mg(2+) contacts are provided by Asp223 and Glu224.

It belongs to the anthranilate phosphoribosyltransferase family. As to quaternary structure, homodimer. It depends on Mg(2+) as a cofactor.

It catalyses the reaction N-(5-phospho-beta-D-ribosyl)anthranilate + diphosphate = 5-phospho-alpha-D-ribose 1-diphosphate + anthranilate. The protein operates within amino-acid biosynthesis; L-tryptophan biosynthesis; L-tryptophan from chorismate: step 2/5. Its function is as follows. Catalyzes the transfer of the phosphoribosyl group of 5-phosphorylribose-1-pyrophosphate (PRPP) to anthranilate to yield N-(5'-phosphoribosyl)-anthranilate (PRA). The protein is Anthranilate phosphoribosyltransferase of Chlamydia caviae (strain ATCC VR-813 / DSM 19441 / 03DC25 / GPIC) (Chlamydophila caviae).